Here is a 105-residue protein sequence, read N- to C-terminus: uncharacterized protein (105 aa).

Residues 47 to 105 (ENASAPRIQPSVTPSPAAPPSTDQLMMEKMMGSAGLNKYRKQEKEKQEEDGNGESLFDF) form a disordered region. The segment covering 86 to 95 (RKQEKEKQEE) has biased composition (basic and acidic residues).

This is an uncharacterized protein from Bacillus subtilis (strain 168).